A 586-amino-acid polypeptide reads, in one-letter code: Acetylcholinesterase (586 aa).

Residues 1 to 21 form the signal peptide; that stretch reads MNLLVTSSLGVLLHLVVLCQA. Asn-80 carries an N-linked (GlcNAc...) asparagine glycan. Residues Cys-88 and Cys-115 are joined by a disulfide bond. Ser-221 acts as the Acyl-ester intermediate in catalysis. Cys-275 and Cys-286 are oxidised to a cystine. Residue Glu-348 is the Charge relay system of the active site. A disulfide bridge connects residues Cys-423 and Cys-542. N-linked (GlcNAc...) asparagine glycosylation occurs at Asn-437. His-461 functions as the Charge relay system in the catalytic mechanism. Residues Asn-478 and Asn-554 are each glycosylated (N-linked (GlcNAc...) asparagine). The GPI-anchor amidated serine moiety is linked to residue Ser-564. A propeptide spans 565 to 586 (removed in mature form); that stretch reads SGTSSSKGIIFYVLFSILYLIF.

Belongs to the type-B carboxylesterase/lipase family. Isoform H form is a homodimer; the asymmetric form is a disulfide-bonded oligomer composed of a collagenic subunit (Q) and a variable number of T catalytic subunits. In terms of processing, an interchain disulfide bond is present in what becomes position 593 of the T isoform. As to expression, found in the synapses and to a lower extent in extrajunctional areas of muscle and nerve, and on erythrocyte membranes.

The protein localises to the cell membrane. Its subcellular location is the synapse. It carries out the reaction acetylcholine + H2O = choline + acetate + H(+). Its activity is regulated as follows. Inhibited by substrate concentrations above 0.5 mM. Its function is as follows. Terminates signal transduction at the neuromuscular junction by rapid hydrolysis of the acetylcholine released into the synaptic cleft. May be involved in cell-cell interactions. The sequence is that of Acetylcholinesterase (ache) from Tetronarce californica (Pacific electric ray).